Here is a 254-residue protein sequence, read N- to C-terminus: Peroxisomal membrane protein 11-2 (254 aa).

The Cytoplasmic segment spans residues 1-113 (MVTAAGSPSS…YHPHPHVHPL (113 aa)). The chain crosses the membrane as a helical span at residues 114–134 (LVLLAYGGQGVYNFLEQFAWL). Residues 135–227 (AKAGLLPARL…TVGDVTGRKG (93 aa)) lie on the Lumenal side of the membrane. The helical transmembrane segment at 228 to 247 (LLGSSTLMASAGLLSALISV) threads the bilayer. The Cytoplasmic portion of the chain corresponds to 248-254 (HKNWNSC).

This sequence belongs to the peroxin-11 family.

Its subcellular location is the peroxisome membrane. In terms of biological role, involved in peroxisomal proliferation. The chain is Peroxisomal membrane protein 11-2 (PEX11-2) from Oryza sativa subsp. japonica (Rice).